Reading from the N-terminus, the 103-residue chain is Large ribosomal subunit protein uL23 (103 aa).

This sequence belongs to the universal ribosomal protein uL23 family. As to quaternary structure, part of the 50S ribosomal subunit. Contacts protein L29, and trigger factor when it is bound to the ribosome.

Functionally, one of the early assembly proteins it binds 23S rRNA. One of the proteins that surrounds the polypeptide exit tunnel on the outside of the ribosome. Forms the main docking site for trigger factor binding to the ribosome. This Chlorobaculum tepidum (strain ATCC 49652 / DSM 12025 / NBRC 103806 / TLS) (Chlorobium tepidum) protein is Large ribosomal subunit protein uL23.